Reading from the N-terminus, the 205-residue chain is Basigin (205 aa).

An N-terminal signal peptide occupies residues 1 to 18; that stretch reads MAAALFVLLGFALLGTHG. Residues 19-103 enclose the Ig-like C2-type domain; that stretch reads ASGAAGTVFT…MGTANIQLHG (85 aa). Topologically, residues 19 to 205 are extracellular; sequence ASGAAGTVFT…AIITLRVRSH (187 aa). 2 disulfide bridges follow: Cys-41/Cys-87 and Cys-126/Cys-185. Residues Asn-44, Asn-152, and Asn-186 are each glycosylated (N-linked (GlcNAc...) asparagine). In terms of domain architecture, Ig-like V-type spans 105-199; the sequence is PRVKAVKSSE…SKGSDQAIIT (95 aa).

As to quaternary structure, homooligomer. Interacts with VEGFA, KDR/VEGFR2, PPIA/CYPA, SLC16A12, SLC16A11, ATP1B2, MAG, L1CAM and AJAP1. Interacts with SLC16A1; interaction mediates SLC16A1 targeting to the plasma membrane. Interacts with SLC16A3; interaction mediates SLC16A3 targeting to the plasma membrane. Interacts with PPIL2; regulates BSG transport to the cell membrane. Interacts with XKR8; promoting its localization at the cell membrane. Interacts with SLC16A6; this interaction mediates targeting to the plasma membrane.

It localises to the cell membrane. The protein localises to the endoplasmic reticulum membrane. The protein resides in the basolateral cell membrane. Its function is as follows. Signaling receptor for cyclophilins, essential for PPIA/CYPA and PPIB/CYPB-dependent signaling related to chemotaxis and adhesion of immune cells. Plays an important role in targeting the monocarboxylate transporters SLC16A1/GLUT1, SLC16A3, SLC16A8, SLC16A11 and SLC16A12 to the plasma membrane. Acts as a coreceptor for vascular endothelial growth factor receptor 2 (KDR/VEGFR2) in endothelial cells enhancing its VEGFA-mediated activation and downstream signaling. Promotes angiogenesis through EPAS1/HIF2A-mediated up-regulation of VEGFA and KDR/VEGFR2 in endothelial cells. In Bos taurus (Bovine), this protein is Basigin (BSG).